A 541-amino-acid chain; its full sequence is Pseudokinase FAM20A (541 aa).

The first 33 residues, 1–33, serve as a signal peptide directing secretion; sequence MPGLRRDRLLTLLLLGALLSADLYFHLWPQVQR. Residues 38-90 form a disordered region; that stretch reads RERPRGCPCTGRASSLARDSAAAASDPGTIVHNFSRTEPRTEPAGGSHSGSSS. Low complexity predominate over residues 49 to 63; that stretch reads RASSLARDSAAAASD. N-linked (GlcNAc...) asparagine glycosylation is found at N70, N145, and N287. 4 cysteine pairs are disulfide-bonded: C314–C330, C319–C323, C378–C452, and C453–C512. N388 carries N-linked (GlcNAc...) asparagine glycosylation. Residue N538 is glycosylated (N-linked (GlcNAc...) asparagine).

This sequence belongs to the FAM20 family. As to quaternary structure, interacts with FAM20C; probably forming a heterotetramer of 2 subunits of FAM20A and 2 subunits of FAM20C. In terms of processing, N-glycosylated. As to expression, highly expressed in lung and liver. Intermediate levels in thymus and ovary.

The protein localises to the secreted. It is found in the golgi apparatus. It localises to the endoplasmic reticulum. In terms of biological role, pseudokinase that acts as an allosteric activator of the Golgi serine/threonine protein kinase FAM20C and is involved in biomineralization of teeth. Forms a complex with FAM20C and increases the ability of FAM20C to phosphorylate the proteins that form the 'matrix' that guides the deposition of the enamel minerals. The protein is Pseudokinase FAM20A of Homo sapiens (Human).